The following is a 458-amino-acid chain: Exodeoxyribonuclease 7 large subunit (458 aa).

The protein belongs to the XseA family. As to quaternary structure, heterooligomer composed of large and small subunits.

The protein localises to the cytoplasm. The catalysed reaction is Exonucleolytic cleavage in either 5'- to 3'- or 3'- to 5'-direction to yield nucleoside 5'-phosphates.. In terms of biological role, bidirectionally degrades single-stranded DNA into large acid-insoluble oligonucleotides, which are then degraded further into small acid-soluble oligonucleotides. This chain is Exodeoxyribonuclease 7 large subunit, found in Escherichia coli O17:K52:H18 (strain UMN026 / ExPEC).